The following is a 287-amino-acid chain: MKIDVEVIKELRQITGAGIGDCKEALESCSGDMDKAREYLREKGLSKAYKKSHRDVADGLVAVFAEGDVGAILKLGSETDFVARNEKFRSLALGLVRGLYGYGVEDLEGFSASSYDGSRVADEIVAAAAVLGENVVLSGVGFVKLSGPGVIGSYVHGMVSEGLGKAAALVVLEGGPHSDELASFAKQLAMHIVAAKPEALSIDTLSSDVVDRERELVARQVEALGKPDSVAQKIIEGRMQKFFEEMVLLEQVFVMDGQTKIRDLLVQKGQSLKHEIRIAAYRLFAIA.

The involved in Mg(2+) ion dislocation from EF-Tu stretch occupies residues 79–82 (TDFV).

The protein belongs to the EF-Ts family.

It is found in the cytoplasm. Functionally, associates with the EF-Tu.GDP complex and induces the exchange of GDP to GTP. It remains bound to the aminoacyl-tRNA.EF-Tu.GTP complex up to the GTP hydrolysis stage on the ribosome. This Anaplasma phagocytophilum (strain HZ) protein is Elongation factor Ts.